A 101-amino-acid polypeptide reads, in one-letter code: DNA-binding protein Fis (101 aa).

A DNA-binding region (H-T-H motif) is located at residues 77–96 (QTRAANMLGINRGTLRKKLK).

The protein belongs to the transcriptional regulatory Fis family. As to quaternary structure, homodimer.

In terms of biological role, activates ribosomal RNA transcription. Plays a direct role in upstream activation of rRNA promoters. The sequence is that of DNA-binding protein Fis from Shewanella halifaxensis (strain HAW-EB4).